Reading from the N-terminus, the 293-residue chain is Bifunctional protein FolD (293 aa).

NADP(+)-binding positions include 165 to 167 (GRS), Thr194, and Val235.

Belongs to the tetrahydrofolate dehydrogenase/cyclohydrolase family. As to quaternary structure, homodimer.

It carries out the reaction (6R)-5,10-methylene-5,6,7,8-tetrahydrofolate + NADP(+) = (6R)-5,10-methenyltetrahydrofolate + NADPH. The enzyme catalyses (6R)-5,10-methenyltetrahydrofolate + H2O = (6R)-10-formyltetrahydrofolate + H(+). Its pathway is one-carbon metabolism; tetrahydrofolate interconversion. Its function is as follows. Catalyzes the oxidation of 5,10-methylenetetrahydrofolate to 5,10-methenyltetrahydrofolate and then the hydrolysis of 5,10-methenyltetrahydrofolate to 10-formyltetrahydrofolate. This Syntrophus aciditrophicus (strain SB) protein is Bifunctional protein FolD.